Here is a 570-residue protein sequence, read N- to C-terminus: Dihydroxy-acid dehydratase (570 aa).

Cys61 contacts [2Fe-2S] cluster. Asp94 contributes to the Mg(2+) binding site. Cys135 is a [2Fe-2S] cluster binding site. Positions 136 and 137 each coordinate Mg(2+). Lys137 carries the post-translational modification N6-carboxylysine. Cys207 contributes to the [2Fe-2S] cluster binding site. Mg(2+) is bound at residue Glu459. The Proton acceptor role is filled by Ser485.

This sequence belongs to the IlvD/Edd family. As to quaternary structure, homodimer. It depends on [2Fe-2S] cluster as a cofactor. Requires Mg(2+) as cofactor.

It catalyses the reaction (2R)-2,3-dihydroxy-3-methylbutanoate = 3-methyl-2-oxobutanoate + H2O. It carries out the reaction (2R,3R)-2,3-dihydroxy-3-methylpentanoate = (S)-3-methyl-2-oxopentanoate + H2O. It participates in amino-acid biosynthesis; L-isoleucine biosynthesis; L-isoleucine from 2-oxobutanoate: step 3/4. Its pathway is amino-acid biosynthesis; L-valine biosynthesis; L-valine from pyruvate: step 3/4. Functionally, functions in the biosynthesis of branched-chain amino acids. Catalyzes the dehydration of (2R,3R)-2,3-dihydroxy-3-methylpentanoate (2,3-dihydroxy-3-methylvalerate) into 2-oxo-3-methylpentanoate (2-oxo-3-methylvalerate) and of (2R)-2,3-dihydroxy-3-methylbutanoate (2,3-dihydroxyisovalerate) into 2-oxo-3-methylbutanoate (2-oxoisovalerate), the penultimate precursor to L-isoleucine and L-valine, respectively. The polypeptide is Dihydroxy-acid dehydratase (Lactococcus lactis subsp. cremoris (strain SK11)).